Reading from the N-terminus, the 737-residue chain is Transcription activator MSS11 (737 aa).

A disordered region spans residues 1-23 (MDNTTNINTNERSSNTDFSSAPN). Positions 51–83 (SKQLLYAHIYNYLIKNNYWNSAAKFLSEADLPL) constitute a LisH domain. Disordered stretches follow at residues 191–220 (TQNS…TNRN), 268–347 (LQSP…PTNQ), 413–439 (GNQN…NANG), and 572–660 (KTNT…TKES). The span at 207–220 (DGSNFNLNDPTNRN) shows a compositional bias: polar residues. Residues 269-314 (QSPAQPQQSSQQQIQQPQRQPQHQQQQQQQQQQQQQQQQQQQQQQQ) show a composition bias toward low complexity. 3 stretches are compositionally biased toward polar residues: residues 330–347 (SENS…PTNQ), 421–439 (TRNN…NANG), and 572–585 (KTNT…STSV). The segment covering 590-643 (NNNNNNNNNNNNNNNSNNSNNNNNNNNSNNTPTVSQPSSKRTSSSSTTPNITTT) has biased composition (low complexity). Residues 646-655 (PKRKQRVGKT) are compositionally biased toward basic residues.

This sequence belongs to the MSS11 family. In terms of assembly, interacts with FLO8, STE12 and TEC1.

Its subcellular location is the cytoplasm. It is found in the nucleus. Transcription factor that regulates pseudohyphal differentiation, invasive growth, floculation, adhesion and starch metabolism in response to nutrient availability. The protein is Transcription activator MSS11 (MSS11) of Saccharomyces cerevisiae (strain YJM789) (Baker's yeast).